The following is a 443-amino-acid chain: Chromosomal replication initiator protein DnaA (443 aa).

The domain I, interacts with DnaA modulators stretch occupies residues 1 to 76 (MMDAWPRCLE…GNGEVALAVG (76 aa)). The interval 76–105 (GSRPRAPEPAPAPVAATIAPQAAPIAPFAG) is domain II. The interval 106–323 (NLDSHYTFAN…GALNTLVARA (218 aa)) is domain III, AAA+ region. ATP is bound by residues glycine 151, glycine 153, lysine 154, and threonine 155. A domain IV, binds dsDNA region spans residues 324–443 (NFTGRSITVE…WEKLIRKLSE (120 aa)).

It belongs to the DnaA family. As to quaternary structure, oligomerizes as a right-handed, spiral filament on DNA at oriC.

The protein localises to the cytoplasm. Functionally, plays an essential role in the initiation and regulation of chromosomal replication. ATP-DnaA binds to the origin of replication (oriC) to initiate formation of the DNA replication initiation complex once per cell cycle. Binds the DnaA box (a 9 base pair repeat at the origin) and separates the double-stranded (ds)DNA. Forms a right-handed helical filament on oriC DNA; dsDNA binds to the exterior of the filament while single-stranded (ss)DNA is stabiized in the filament's interior. The ATP-DnaA-oriC complex binds and stabilizes one strand of the AT-rich DNA unwinding element (DUE), permitting loading of DNA polymerase. After initiation quickly degrades to an ADP-DnaA complex that is not apt for DNA replication. Binds acidic phospholipids. This chain is Chromosomal replication initiator protein DnaA, found in Xanthomonas oryzae pv. oryzae (strain KACC10331 / KXO85).